We begin with the raw amino-acid sequence, 132 residues long: Small ribosomal subunit protein uS8 (132 aa).

This sequence belongs to the universal ribosomal protein uS8 family. In terms of assembly, part of the 30S ribosomal subunit. Contacts proteins S5 and S12.

Its function is as follows. One of the primary rRNA binding proteins, it binds directly to 16S rRNA central domain where it helps coordinate assembly of the platform of the 30S subunit. In Allorhizobium ampelinum (strain ATCC BAA-846 / DSM 112012 / S4) (Agrobacterium vitis (strain S4)), this protein is Small ribosomal subunit protein uS8.